We begin with the raw amino-acid sequence, 332 residues long: Hdr-like menaquinol oxidoreductase cytochrome b-like subunit (332 aa).

The next 5 membrane-spanning stretches (helical) occupy residues 3–23 (GVIF…IGVI), 97–117 (DARW…LVLI), 143–163 (VFIP…FLLW), 177–197 (LPSD…GNVM), and 230–250 (IEPI…YFPF).

Consists of five subunits: an integral membrane subunit, a cytochrome b-like subunit, a cytochrome c subunit and two iron-sulfur subunits.

The protein resides in the cell membrane. Has menaquinol-oxidizing activity. HmeC and HmeD subunits may together mediate electron transfer from menaquinol to an unidentified electron acceptor on the cytoplasmic side of the membrane. The chain is Hdr-like menaquinol oxidoreductase cytochrome b-like subunit (hmeC) from Archaeoglobus fulgidus (strain ATCC 49558 / DSM 4304 / JCM 9628 / NBRC 100126 / VC-16).